The sequence spans 222 residues: Thiopurine S-methyltransferase (222 aa).

W10, L45, E66, and R124 together coordinate S-adenosyl-L-methionine.

This sequence belongs to the class I-like SAM-binding methyltransferase superfamily. TPMT family.

It localises to the cytoplasm. The enzyme catalyses S-adenosyl-L-methionine + a thiopurine = S-adenosyl-L-homocysteine + a thiopurine S-methylether.. The sequence is that of Thiopurine S-methyltransferase from Methylococcus capsulatus (strain ATCC 33009 / NCIMB 11132 / Bath).